A 359-amino-acid chain; its full sequence is Histidinol-phosphate aminotransferase (359 aa).

K217 bears the N6-(pyridoxal phosphate)lysine mark.

Belongs to the class-II pyridoxal-phosphate-dependent aminotransferase family. Histidinol-phosphate aminotransferase subfamily. As to quaternary structure, homodimer. The cofactor is pyridoxal 5'-phosphate.

The enzyme catalyses L-histidinol phosphate + 2-oxoglutarate = 3-(imidazol-4-yl)-2-oxopropyl phosphate + L-glutamate. The protein operates within amino-acid biosynthesis; L-histidine biosynthesis; L-histidine from 5-phospho-alpha-D-ribose 1-diphosphate: step 7/9. The polypeptide is Histidinol-phosphate aminotransferase (Roseobacter denitrificans (strain ATCC 33942 / OCh 114) (Erythrobacter sp. (strain OCh 114))).